Consider the following 579-residue polypeptide: Protein downstream neighbor of son homolog (579 aa).

2 disordered regions span residues 1-68 and 331-379; these read MAEL…RRNP and FSQP…DESF. Basic and acidic residues predominate over residues 339-348; it reads DTGKKQKKPE. Acidic residues predominate over residues 365 to 378; sequence EADEASDESDEDES.

It belongs to the DONSON family. As to quaternary structure, component of the replisome complex.

It is found in the nucleus. In terms of biological role, replisome component that maintains genome stability by protecting stalled or damaged replication forks. After the induction of replication stress, required for the stabilization of stalled replication forks, the efficient activation of the intra-S-phase and G/2M cell-cycle checkpoints and the maintenance of genome stability. This Xenopus laevis (African clawed frog) protein is Protein downstream neighbor of son homolog.